The primary structure comprises 333 residues: Holliday junction branch migration complex subunit RuvB (333 aa).

Residues 4–185 (IDRLVSTDVL…FGIVQRLEFY (182 aa)) are large ATPase domain (RuvB-L). ATP is bound by residues isoleucine 24, arginine 25, glycine 66, lysine 69, threonine 70, threonine 71, 132-134 (EDY), arginine 175, tyrosine 185, and arginine 222. Threonine 70 serves as a coordination point for Mg(2+). Residues 186–256 (SVPDLEHIVS…IAIKALEMLN (71 aa)) form a small ATPAse domain (RuvB-S) region. A head domain (RuvB-H) region spans residues 259–333 (KEGLDYMDSK…HAYQHFICGG (75 aa)). Residues arginine 295, arginine 314, and arginine 319 each contribute to the DNA site.

The protein belongs to the RuvB family. In terms of assembly, homohexamer. Forms an RuvA(8)-RuvB(12)-Holliday junction (HJ) complex. HJ DNA is sandwiched between 2 RuvA tetramers; dsDNA enters through RuvA and exits via RuvB. An RuvB hexamer assembles on each DNA strand where it exits the tetramer. Each RuvB hexamer is contacted by two RuvA subunits (via domain III) on 2 adjacent RuvB subunits; this complex drives branch migration. In the full resolvosome a probable DNA-RuvA(4)-RuvB(12)-RuvC(2) complex forms which resolves the HJ.

Its subcellular location is the cytoplasm. The enzyme catalyses ATP + H2O = ADP + phosphate + H(+). The RuvA-RuvB-RuvC complex processes Holliday junction (HJ) DNA during genetic recombination and DNA repair, while the RuvA-RuvB complex plays an important role in the rescue of blocked DNA replication forks via replication fork reversal (RFR). RuvA specifically binds to HJ cruciform DNA, conferring on it an open structure. The RuvB hexamer acts as an ATP-dependent pump, pulling dsDNA into and through the RuvAB complex. RuvB forms 2 homohexamers on either side of HJ DNA bound by 1 or 2 RuvA tetramers; 4 subunits per hexamer contact DNA at a time. Coordinated motions by a converter formed by DNA-disengaged RuvB subunits stimulates ATP hydrolysis and nucleotide exchange. Immobilization of the converter enables RuvB to convert the ATP-contained energy into a lever motion, pulling 2 nucleotides of DNA out of the RuvA tetramer per ATP hydrolyzed, thus driving DNA branch migration. The RuvB motors rotate together with the DNA substrate, which together with the progressing nucleotide cycle form the mechanistic basis for DNA recombination by continuous HJ branch migration. Branch migration allows RuvC to scan DNA until it finds its consensus sequence, where it cleaves and resolves cruciform DNA. The sequence is that of Holliday junction branch migration complex subunit RuvB from Hamiltonella defensa subsp. Acyrthosiphon pisum (strain 5AT).